The following is a 325-amino-acid chain: tRNA(Ile)-lysidine synthase (325 aa).

34-39 contributes to the ATP binding site; sequence SGGADS.

It belongs to the tRNA(Ile)-lysidine synthase family.

The protein resides in the cytoplasm. It catalyses the reaction cytidine(34) in tRNA(Ile2) + L-lysine + ATP = lysidine(34) in tRNA(Ile2) + AMP + diphosphate + H(+). In terms of biological role, ligates lysine onto the cytidine present at position 34 of the AUA codon-specific tRNA(Ile) that contains the anticodon CAU, in an ATP-dependent manner. Cytidine is converted to lysidine, thus changing the amino acid specificity of the tRNA from methionine to isoleucine. The sequence is that of tRNA(Ile)-lysidine synthase from Rhodococcus jostii (strain RHA1).